Consider the following 182-residue polypeptide: Crossover junction endodeoxyribonuclease RuvC (182 aa).

Residues Asp7, Glu67, and Asp139 contribute to the active site. Residues Asp7, Glu67, and Asp139 each coordinate Mg(2+).

This sequence belongs to the RuvC family. As to quaternary structure, homodimer which binds Holliday junction (HJ) DNA. The HJ becomes 2-fold symmetrical on binding to RuvC with unstacked arms; it has a different conformation from HJ DNA in complex with RuvA. In the full resolvosome a probable DNA-RuvA(4)-RuvB(12)-RuvC(2) complex forms which resolves the HJ. The cofactor is Mg(2+).

The protein localises to the cytoplasm. The enzyme catalyses Endonucleolytic cleavage at a junction such as a reciprocal single-stranded crossover between two homologous DNA duplexes (Holliday junction).. The RuvA-RuvB-RuvC complex processes Holliday junction (HJ) DNA during genetic recombination and DNA repair. Endonuclease that resolves HJ intermediates. Cleaves cruciform DNA by making single-stranded nicks across the HJ at symmetrical positions within the homologous arms, yielding a 5'-phosphate and a 3'-hydroxyl group; requires a central core of homology in the junction. The consensus cleavage sequence is 5'-(A/T)TT(C/G)-3'. Cleavage occurs on the 3'-side of the TT dinucleotide at the point of strand exchange. HJ branch migration catalyzed by RuvA-RuvB allows RuvC to scan DNA until it finds its consensus sequence, where it cleaves and resolves the cruciform DNA. The sequence is that of Crossover junction endodeoxyribonuclease RuvC from Bordetella parapertussis (strain 12822 / ATCC BAA-587 / NCTC 13253).